Consider the following 435-residue polypeptide: Ribosomal protein uS12 methylthiotransferase RimO (435 aa).

The 113-residue stretch at 3 to 115 (KKLHVVSLGC…IDELISQKKS (113 aa)) folds into the MTTase N-terminal domain. 6 residues coordinate [4Fe-4S] cluster: Cys-12, Cys-46, Cys-78, Cys-146, Cys-150, and Cys-153. One can recognise a Radical SAM core domain in the interval 132-361 (TGSNYHAYIK…DAIVKKQQMK (230 aa)).

This sequence belongs to the methylthiotransferase family. RimO subfamily. The cofactor is [4Fe-4S] cluster.

The protein resides in the cytoplasm. The enzyme catalyses L-aspartate(89)-[ribosomal protein uS12]-hydrogen + (sulfur carrier)-SH + AH2 + 2 S-adenosyl-L-methionine = 3-methylsulfanyl-L-aspartate(89)-[ribosomal protein uS12]-hydrogen + (sulfur carrier)-H + 5'-deoxyadenosine + L-methionine + A + S-adenosyl-L-homocysteine + 2 H(+). Catalyzes the methylthiolation of an aspartic acid residue of ribosomal protein uS12. The protein is Ribosomal protein uS12 methylthiotransferase RimO of Nitratiruptor sp. (strain SB155-2).